Reading from the N-terminus, the 881-residue chain is Plakophilin-2 (881 aa).

The segment at 1 to 348 is required for interaction with influenza A virus RNA polymerase subunit PB1; the sequence is MAAPGAPAEY…FTDSQLGNAD (348 aa). Positions 1–360 are required for binding to single-stranded DNA; the sequence is MAAPGAPAEY…MTLERAVSML (360 aa). At serine 44 the chain carries Phosphoserine. Position 46 is an omega-N-methylarginine (arginine 46). Serine 82 is modified (phosphoserine; by MARK3). 7 positions are modified to phosphoserine: serine 132, serine 135, serine 151, serine 154, serine 155, serine 169, and serine 172. A Phosphothreonine modification is found at threonine 177. 5 positions are modified to phosphoserine: serine 183, serine 197, serine 251, serine 294, and serine 329. Residues 282 to 314 are disordered; the sequence is QNRASRSSWHQSSFHSTRTLREAGPSVAVDSSG. Over residues 286 to 297 the composition is skewed to low complexity; sequence SRSSWHQSSFHS. ARM repeat units follow at residues 341–383, 385–424, 427–467, 571–616, 671–711, 719–758, 763–804, and 807–849; these read DSQL…ECFQ, SEAR…NLVF, NDNK…NLRS, DGRK…NLSY, PKGV…NLTA, SVAQ…NLSR, QNEI…NIIQ, and YQNA…SLWA.

It belongs to the beta-catenin family. As to quaternary structure, interacts with DSC2. Interacts with JUP. Interacts with KRT5/CK5, KRT8/CK8, KRT14/CK14, KRT18/CK18 and VIM. Interacts (via N-terminus) with MARK3/C-TAK1. Interacts with DSP. Interacts with DSG1, DSG2 and DSG3. Interacts (via N-terminus) with CTNNB1. Interacts with CDH1. Interacts with the RNA polymerase III (Pol III) complex proteins POLR3A/RPC155, POLR3F/RPC39 and POLR3C/RPC82. Interacts with CTNNA3. Interacts (via N-terminus) with SCN5A/Nav1.5. Interacts with ANK3/ANKG and GJA1/CX43. (Microbial infection) Interacts (via N-terminus) with influenza A virus RNA polymerase subunit PB1 (via C-terminus); the interaction competitively inhibits the interaction between the subunits PB1 and PB2. In terms of tissue distribution, expressed at intercalated disks in the heart (at protein level). Expressed in gingival epithelial, endothelial and fibroblast cells (at protein level). Faintly expressed in tracheal epithelial cells (at protein level). Widely expressed. Found at desmosomal plaques in simple and stratified epithelia and in non-epithelial tissues such as myocardium and lymph node follicles. In most stratified epithelia found in the desmosomes of the basal cell layer and seems to be absent from suprabasal strata. As to expression, (Microbial infection) Abundantly expressed in tracheal epithelial cells following influenza A virus infection (at protein level).

Its subcellular location is the nucleus. The protein resides in the cell junction. It localises to the desmosome. The protein localises to the cytoplasm. Its function is as follows. A component of desmosome cell-cell junctions which are required for positive regulation of cellular adhesion. Regulates focal adhesion turnover resulting in changes in focal adhesion size, cell adhesion and cell spreading, potentially via transcriptional modulation of beta-integrins. Required to maintain gingival epithelial barrier function. Important component of the desmosome that is also required for localization of desmosome component proteins such as DSC2, DSG2 and JUP to the desmosome cell-cell junction. Required for the formation of desmosome cell junctions in cardiomyocytes, thereby required for the correct formation of the heart, specifically trabeculation and formation of the atria walls. Loss of desmosome cell junctions leads to mis-localization of DSP and DSG2 resulting in disruption of cell-cell adhesion and disordered intermediate filaments. Modulates profibrotic gene expression in cardiomyocytes via regulation of DSP expression and subsequent activation of downstream TGFB1 and MAPK14/p38 MAPK signaling. Required for cardiac sodium current propagation and electrical synchrony in cardiac myocytes, via ANK3 stabilization and modulation of SCN5A/Nav1.5 localization to cell-cell junctions. Required for mitochondrial function, nuclear envelope integrity and positive regulation of SIRT3 transcription via maintaining DES localization at its nuclear envelope and cell tip anchoring points, and thereby preserving regulation of the transcriptional program. Maintenance of nuclear envelope integrity protects against DNA damage and transcriptional dysregulation of genes, especially those involved in the electron transport chain, thereby preserving mitochondrial function and protecting against superoxide radical anion generation. Binds single-stranded DNA (ssDNA). May regulate the localization of GJA1 to gap junctions in intercalated disks of the heart. Involved in the inhibition of viral infection by influenza A viruses (IAV). Acts as a host restriction factor for IAV viral propagation, potentially via disrupting the interaction of IAV polymerase complex proteins. The polypeptide is Plakophilin-2 (Homo sapiens (Human)).